The chain runs to 65 residues: Ferredoxin-1 (65 aa).

Positions 2-30 constitute a 4Fe-4S ferredoxin-type domain; sequence AMKIDPELCTSCGDCEPVCPTNAIAPKKG. [4Fe-4S] cluster-binding residues include Cys10, Cys13, Cys16, Cys20, Cys39, Cys42, Cys51, and Cys55.

Requires [4Fe-4S] cluster as cofactor.

Functionally, ferredoxins are iron-sulfur proteins that transfer electrons in a wide variety of metabolic reactions. This ferredoxin probably participates in nitrogen fixation. This chain is Ferredoxin-1 (fdxN), found in Rhodobacter capsulatus (Rhodopseudomonas capsulata).